The primary structure comprises 99 residues: CLAVATA3/ESR (CLE)-related protein 41 (99 aa).

The first 34 residues, 1–34 (MATSNDQTNTKSSHSRTLLLLFIFLSLLLFSSLT), serve as a signal peptide directing secretion. Positions 60–99 (ASSTMDLRPKASTRRSRTSRRREFGNDAHEVPSGPNPISN) are disordered. Positions 70–79 (ASTRRSRTSR) are enriched in basic residues. Residues 80-89 (RREFGNDAHE) show a composition bias toward basic and acidic residues. Residues Pro91 and Pro94 each carry the hydroxyproline modification. The O-linked (Ara...) hydroxyproline glycan is linked to Pro94.

It belongs to the CLV3/ESR signal peptide family. As to quaternary structure, CLE41p interacts specifically with the leucine-rich repeat receptor-like protein kinase TDR. The O-glycosylation (arabinosylation) of the hydroxyproline Pro-94 enhances binding affinity of the CLE41p peptide for its receptor. As to expression, mostly expressed in inflorescence and roots, and, to a lower extent, in seedlings, flowers, leaves and siliques. Observed along the vascular strands in cotyledons, leaves and roots, but not in shoot apical meristems (SAM). Restricted to the phloem and the neighboring pericycle cells in the roots and hypocotyls.

The protein localises to the secreted. The protein resides in the extracellular space. Functionally, extracellular signal peptide that regulates cell fate. May act with TDR as a ligand-receptor pair in a signal transduction pathway that represses tracheary element differentiation but promotes the formation of procambial cells adjacent to phloem cells in the veins in an auxin-dependent manner. Regulates the transition of protophloem cells from proliferation to differentiation, thus impinging on postembryonic growth capacity of the root meristem; this signaling pathway requires CRN and CLV2. The protein is CLAVATA3/ESR (CLE)-related protein 41 of Arabidopsis thaliana (Mouse-ear cress).